The chain runs to 236 residues: Purine nucleoside phosphorylase DeoD-type 2 (236 aa).

Residue histidine 5 coordinates a purine D-ribonucleoside. Phosphate contacts are provided by residues glycine 21, arginine 25, arginine 44, and 88-91 (RVGT). A purine D-ribonucleoside is bound by residues 180–182 (EME) and 204–205 (SD). The Proton donor role is filled by aspartate 205.

The protein belongs to the PNP/UDP phosphorylase family. In terms of assembly, homohexamer; trimer of homodimers.

It catalyses the reaction a purine D-ribonucleoside + phosphate = a purine nucleobase + alpha-D-ribose 1-phosphate. It carries out the reaction a purine 2'-deoxy-D-ribonucleoside + phosphate = a purine nucleobase + 2-deoxy-alpha-D-ribose 1-phosphate. Its function is as follows. Catalyzes the reversible phosphorolytic breakdown of the N-glycosidic bond in the beta-(deoxy)ribonucleoside molecules, with the formation of the corresponding free purine bases and pentose-1-phosphate. This Shewanella oneidensis (strain ATCC 700550 / JCM 31522 / CIP 106686 / LMG 19005 / NCIMB 14063 / MR-1) protein is Purine nucleoside phosphorylase DeoD-type 2.